A 750-amino-acid polypeptide reads, in one-letter code: Photosystem I P700 chlorophyll a apoprotein A1 (750 aa).

8 consecutive transmembrane segments (helical) span residues 72 to 95 (VFSA…FHGA), 158 to 181 (LYTT…FHYH), 197 to 221 (MNHH…HVSL), 293 to 311 (TVHH…GHMY), 348 to 371 (WHAQ…HHMY), 387 to 413 (LSLF…IFMV), 435 to 457 (AIIS…LYIH), and 532 to 550 (FLVH…LILL). [4Fe-4S] cluster contacts are provided by C574 and C583. 2 consecutive transmembrane segments (helical) span residues 590–611 (HVFL…HFSW) and 664–686 (LSAY…MFLF). Residue H675 coordinates chlorophyll a'. Residues M683 and Y691 each contribute to the chlorophyll a site. W692 is a binding site for phylloquinone. The chain crosses the membrane as a helical span at residues 724 to 744 (AVGVAHYLLGGIATTWAFFLA).

Belongs to the PsaA/PsaB family. In terms of assembly, the PsaA/B heterodimer binds the P700 chlorophyll special pair and subsequent electron acceptors. PSI consists of a core antenna complex that captures photons, and an electron transfer chain that converts photonic excitation into a charge separation. The eukaryotic PSI reaction center is composed of at least 11 subunits. It depends on P700 is a chlorophyll a/chlorophyll a' dimer, A0 is one or more chlorophyll a, A1 is one or both phylloquinones and FX is a shared 4Fe-4S iron-sulfur center. as a cofactor.

The protein resides in the plastid. It is found in the chloroplast thylakoid membrane. It carries out the reaction reduced [plastocyanin] + hnu + oxidized [2Fe-2S]-[ferredoxin] = oxidized [plastocyanin] + reduced [2Fe-2S]-[ferredoxin]. In terms of biological role, psaA and PsaB bind P700, the primary electron donor of photosystem I (PSI), as well as the electron acceptors A0, A1 and FX. PSI is a plastocyanin-ferredoxin oxidoreductase, converting photonic excitation into a charge separation, which transfers an electron from the donor P700 chlorophyll pair to the spectroscopically characterized acceptors A0, A1, FX, FA and FB in turn. Oxidized P700 is reduced on the lumenal side of the thylakoid membrane by plastocyanin. This chain is Photosystem I P700 chlorophyll a apoprotein A1, found in Mesostigma viride (Green alga).